Consider the following 276-residue polypeptide: Urease accessory protein UreD (276 aa).

The protein belongs to the UreD family. In terms of assembly, ureD, UreF and UreG form a complex that acts as a GTP-hydrolysis-dependent molecular chaperone, activating the urease apoprotein by helping to assemble the nickel containing metallocenter of UreC. The UreE protein probably delivers the nickel.

It localises to the cytoplasm. Its function is as follows. Required for maturation of urease via the functional incorporation of the urease nickel metallocenter. In Polaromonas sp. (strain JS666 / ATCC BAA-500), this protein is Urease accessory protein UreD.